The primary structure comprises 525 residues: Peptide chain release factor 3 (525 aa).

One can recognise a tr-type G domain in the interval 9–276 (AKRRTFAIIS…GFTRYAPAPQ (268 aa)). GTP contacts are provided by residues 18–25 (SHPDAGKT), 86–90 (DTPGH), and 140–143 (NKFD).

Belongs to the TRAFAC class translation factor GTPase superfamily. Classic translation factor GTPase family. PrfC subfamily.

The protein resides in the cytoplasm. In terms of biological role, increases the formation of ribosomal termination complexes and stimulates activities of RF-1 and RF-2. It binds guanine nucleotides and has strong preference for UGA stop codons. It may interact directly with the ribosome. The stimulation of RF-1 and RF-2 is significantly reduced by GTP and GDP, but not by GMP. The chain is Peptide chain release factor 3 from Francisella tularensis subsp. tularensis (strain FSC 198).